We begin with the raw amino-acid sequence, 286 residues long: Putative sugar uptake protein lmo0176 (286 aa).

8 helical membrane-spanning segments follow: residues 4-26 (MIAL…FGGS), 33-55 (GMTL…VYTL), 114-136 (LRII…TSYA), 149-167 (GLIT…VVLI), 177-194 (AILP…IMTH), 207-226 (LLLT…MVHA), 230-252 (VGVA…GGII), and 264-283 (LFVI…IGVA).

Belongs to the GRP transporter (TC 2.A.7.5) family.

The protein localises to the cell membrane. The chain is Putative sugar uptake protein lmo0176 from Listeria monocytogenes serovar 1/2a (strain ATCC BAA-679 / EGD-e).